We begin with the raw amino-acid sequence, 493 residues long: Protein nucleotidyltransferase YdiU (493 aa).

The ATP site is built by Gly94, Gly96, Arg97, Lys117, Asp129, Gly130, Arg180, and Arg187. Residue Asp256 is the Proton acceptor of the active site. Positions 257 and 266 each coordinate Mg(2+). Position 266 (Asp266) interacts with ATP.

This sequence belongs to the SELO family. Mg(2+) is required as a cofactor. The cofactor is Mn(2+).

It catalyses the reaction L-seryl-[protein] + ATP = 3-O-(5'-adenylyl)-L-seryl-[protein] + diphosphate. The enzyme catalyses L-threonyl-[protein] + ATP = 3-O-(5'-adenylyl)-L-threonyl-[protein] + diphosphate. It carries out the reaction L-tyrosyl-[protein] + ATP = O-(5'-adenylyl)-L-tyrosyl-[protein] + diphosphate. The catalysed reaction is L-histidyl-[protein] + UTP = N(tele)-(5'-uridylyl)-L-histidyl-[protein] + diphosphate. It catalyses the reaction L-seryl-[protein] + UTP = O-(5'-uridylyl)-L-seryl-[protein] + diphosphate. The enzyme catalyses L-tyrosyl-[protein] + UTP = O-(5'-uridylyl)-L-tyrosyl-[protein] + diphosphate. Its function is as follows. Nucleotidyltransferase involved in the post-translational modification of proteins. It can catalyze the addition of adenosine monophosphate (AMP) or uridine monophosphate (UMP) to a protein, resulting in modifications known as AMPylation and UMPylation. The polypeptide is Protein nucleotidyltransferase YdiU (Hahella chejuensis (strain KCTC 2396)).